A 976-amino-acid chain; its full sequence is Ephrin type-A receptor 2 (976 aa).

Residues 1 to 23 form the signal peptide; the sequence is MELQAARACFALLWGCALAAAAA. The tract at residues 1 to 206 is mediates interaction with CLDN4; the sequence is MELQAARACF…YYKKCPELLQ (206 aa). The Extracellular portion of the chain corresponds to 24 to 537; it reads AQGKEVVLLD…SPEGSGNLAV (514 aa). In terms of domain architecture, Eph LBD spans 28 to 206; sequence EVVLLDFAAA…YYKKCPELLQ (179 aa). 2 disulfides stabilise this stretch: Cys-70-Cys-188 and Cys-105-Cys-115. Residues 328 to 432 enclose the Fibronectin type-III 1 domain; the sequence is PPSAPHYLTA…TSRSFRTASV (105 aa). 2 N-linked (GlcNAc...) asparagine glycosylation sites follow: Asn-407 and Asn-435. One can recognise a Fibronectin type-III 2 domain in the interval 438 to 529; the sequence is EPPKVRLEGR…KVHEFQTLSP (92 aa). A helical transmembrane segment spans residues 538–558; that stretch reads IGGVAVGVVLLLVLAGVGFFI. The Cytoplasmic portion of the chain corresponds to 559-976; that stretch reads HRRRKNQRAR…DQVNTVGIPI (418 aa). Phosphoserine is present on Ser-570. At Tyr-575 the chain carries Phosphotyrosine. Ser-579 carries the phosphoserine modification. A Phosphotyrosine; by autocatalysis modification is found at Tyr-588. Tyr-594 bears the Phosphotyrosine mark. The interval 606-906 is mediates interaction with ARHGEF16 and ELMO2; that stretch reads TEIHPSCVTR…STSGSEGVPF (301 aa). One can recognise a Protein kinase domain in the interval 613-875; the sequence is VTRQKVIGAG…DIVSILDKLI (263 aa). 619 to 627 serves as a coordination point for ATP; the sequence is IGAGEFGEV. A Phosphotyrosine modification is found at Tyr-628. Lys-646 contributes to the ATP binding site. A Phosphothreonine modification is found at Thr-647. Tyr-735 is modified (phosphotyrosine; by autocatalysis). Asp-739 functions as the Proton acceptor in the catalytic mechanism. The residue at position 772 (Tyr-772) is a Phosphotyrosine. Ser-869 and Ser-892 each carry phosphoserine. The negatively regulates interaction with ARHGEF16 stretch occupies residues 886–976; the sequence is DFDPRVSIRL…DQVNTVGIPI (91 aa). Ser-897 carries the post-translational modification Phosphoserine; by PKB/AKT1, RPS6KA1, RPS6KA3 AND PKA. At Ser-901 the chain carries Phosphoserine. An SAM domain is found at 904-968; that stretch reads VPFRTVSEWL…AYSLLGLKDQ (65 aa). At Tyr-921 the chain carries Phosphotyrosine; by autocatalysis. Tyr-930 is modified (phosphotyrosine). A PDZ-binding motif is present at residues 974 to 976; it reads IPI.

The protein belongs to the protein kinase superfamily. Tyr protein kinase family. Ephrin receptor subfamily. Homodimer. Interacts with SLA. Interacts (phosphorylated form) with VAV2, VAV3 and PI3-kinase p85 subunit (PIK3R1, PIK3R2 or PIK3R3); critical for the EFNA1-induced activation of RAC1 which stimulates cell migration. Interacts with INPPL1; regulates activated EPHA2 endocytosis and degradation. Interacts (inactivated form) with PTK2/FAK1 and interacts (EFNA1 ligand-activated form) with PTPN11; regulates integrin-mediated adhesion. Interacts with ARHGEF16, DOCK4 and ELMO2; mediates ligand-independent activation of RAC1 which stimulates cell migration. Interacts with CLDN4; phosphorylates CLDN4 and may regulate tight junctions. Interacts with ACP1. Interacts (via SAM domain) with ANKS1A (via SAM domain). Interacts with CEMIP. Interacts with NCK1; may regulate EPHA2 activity in cell migration and adhesion. Interacts with TIMD4. As to quaternary structure, (Microbial infection) Interacts with human herpes virus 8/HHV-8 glycoprotein L/gL and glycoprotein H/gH heterodimer; this interaction triggers EPHA2 phosphorylation and endocytosis, allowing virus entry. In terms of assembly, (Microbial infection) Interacts with human cytomegalovirus (HCMV) glycoprotein L/gL and glycoprotein H/gH heterodimer. (Microbial infection) Interacts with Epstein-Barr virus/HHV-4 glycoprotein L/gL and glycoprotein H/gH heterodimer; this interaction facilitates virus internalization and fusion. Post-translationally, autophosphorylates. Phosphorylated on tyrosine upon binding and activation by EFNA1. Phosphorylated residues Tyr-588 and Tyr-594 are required for binding VAV2 and VAV3 while phosphorylated residues Tyr-735 and Tyr-930 are required for binding PI3-kinase p85 subunit (PIK3R1, PIK3R2 or PIK3R3). These phosphorylated residues are critical for recruitment of VAV2 and VAV3 and PI3-kinase p85 subunit which transduce downstream signaling to activate RAC1 GTPase and cell migration. Dephosphorylation of Tyr-930 by PTPRF prevents the interaction of EPHA2 with NCK1. Phosphorylated at Ser-897 by PKB; serum-induced phosphorylation which targets EPHA2 to the cell leading edge and stimulates cell migration. Phosphorylation by PKB is inhibited by EFNA1-activated EPHA2 which regulates PKB activity via a reciprocal regulatory loop. Phosphorylated at Ser-897 in response to TNF by RPS6KA1 and RPS6KA3; RPS6KA-EPHA2 signaling pathway controls cell migration. Phosphorylated at Ser-897 by PKA; blocks cell retraction induced by EPHA2 kinase activity. Dephosphorylated by ACP1. In terms of processing, ubiquitinated by CHIP/STUB1. Ubiquitination is regulated by the HSP90 chaperone and regulates the receptor stability and activity through proteasomal degradation. ANKS1A prevents ubiquitination and degradation. As to expression, expressed in brain and glioma tissue and glioma cell lines (at protein level). Expressed most highly in tissues that contain a high proportion of epithelial cells, e.g. skin, intestine, lung, and ovary.

Its subcellular location is the cell membrane. It localises to the cell projection. The protein localises to the ruffle membrane. The protein resides in the lamellipodium membrane. It is found in the cell junction. Its subcellular location is the focal adhesion. It carries out the reaction L-tyrosyl-[protein] + ATP = O-phospho-L-tyrosyl-[protein] + ADP + H(+). Receptor tyrosine kinase which binds promiscuously membrane-bound ephrin-A family ligands residing on adjacent cells, leading to contact-dependent bidirectional signaling into neighboring cells. The signaling pathway downstream of the receptor is referred to as forward signaling while the signaling pathway downstream of the ephrin ligand is referred to as reverse signaling. Activated by the ligand ephrin-A1/EFNA1 regulates migration, integrin-mediated adhesion, proliferation and differentiation of cells. Regulates cell adhesion and differentiation through DSG1/desmoglein-1 and inhibition of the ERK1/ERK2 (MAPK3/MAPK1, respectively) signaling pathway. May also participate in UV radiation-induced apoptosis and have a ligand-independent stimulatory effect on chemotactic cell migration. During development, may function in distinctive aspects of pattern formation and subsequently in development of several fetal tissues. Involved for instance in angiogenesis, in early hindbrain development and epithelial proliferation and branching morphogenesis during mammary gland development. Engaged by the ligand ephrin-A5/EFNA5 may regulate lens fiber cells shape and interactions and be important for lens transparency development and maintenance. With ephrin-A2/EFNA2 may play a role in bone remodeling through regulation of osteoclastogenesis and osteoblastogenesis. Its function is as follows. (Microbial infection) Acts as a receptor for hepatitis C virus (HCV) in hepatocytes and facilitates its cell entry. Mediates HCV entry by promoting the formation of the CD81-CLDN1 receptor complexes that are essential for HCV entry and by enhancing membrane fusion of cells expressing HCV envelope glycoproteins. Functionally, acts as a receptor for human cytomegalovirus (HCMV) to mediate viral entry and fusion in glioblastoma cells. The polypeptide is Ephrin type-A receptor 2 (EPHA2) (Homo sapiens (Human)).